The primary structure comprises 543 residues: T-complex protein 1 subunit eta (543 aa).

At Met1 the chain carries N-acetylmethionine. Gly41 serves as a coordination point for ADP. Gly41 contributes to the ATP binding site. Residue Lys67 is modified to N6-acetyllysine. Asp92 provides a ligand contact to Mg(2+). The ADP site is built by Gly93, Thr94, Thr95, Ser96, Ser164, and Ser165. Residue Gly93 participates in ATP binding. Ser96 lines the ATP pocket. Lys250 and Lys320 each carry N6-acetyllysine. Arg398 and Gly409 together coordinate ATP. An ADP-binding site is contributed by Gly409. A Glycyl lysine isopeptide (Lys-Gly) (interchain with G-Cter in SUMO2) cross-link involves residue Lys430. Glu494 and Arg499 together coordinate ADP. Arg499 is a binding site for ATP. Residue Arg535 is modified to Omega-N-methylarginine.

The protein belongs to the TCP-1 chaperonin family. As to quaternary structure, component of the chaperonin-containing T-complex (TRiC), a hexadecamer composed of two identical back-to-back stacked rings enclosing a protein folding chamber. Each ring is made up of eight different subunits: TCP1/CCT1, CCT2, CCT3, CCT4, CCT5, CCT6A/CCT6, CCT7, CCT8. Interacts with PACRG. Interacts with DLEC1.

The protein localises to the cytoplasm. The enzyme catalyses ATP + H2O = ADP + phosphate + H(+). In terms of biological role, component of the chaperonin-containing T-complex (TRiC), a molecular chaperone complex that assists the folding of actin, tubulin and other proteins upon ATP hydrolysis. The TRiC complex mediates the folding of WRAP53/TCAB1, thereby regulating telomere maintenance. This chain is T-complex protein 1 subunit eta (CCT7), found in Pongo abelii (Sumatran orangutan).